Here is a 120-residue protein sequence, read N- to C-terminus: uncharacterized protein (120 aa).

Positions 1–27 (MPKIGVSLIVLIMLIIFLAGCNKNEQN) are cleaved as a signal peptide.

This is an uncharacterized protein from Bacillus subtilis (strain 168).